The primary structure comprises 334 residues: TPR repeat-containing protein MJ0798 (334 aa).

TPR repeat units lie at residues 102 to 135 (WKLW…NQNT), 137 to 168 (LLCK…DRNN), 169 to 202 (YKAL…NPND), 204 to 235 (EALE…KPDD), 236 to 269 (IDLI…NPNV), 273 to 306 (EQIY…NLYH), and 308 to 333 (EIYE…YKKL).

The polypeptide is TPR repeat-containing protein MJ0798 (Methanocaldococcus jannaschii (strain ATCC 43067 / DSM 2661 / JAL-1 / JCM 10045 / NBRC 100440) (Methanococcus jannaschii)).